Here is a 305-residue protein sequence, read N- to C-terminus: Glycine--tRNA ligase alpha subunit (305 aa).

The protein belongs to the class-II aminoacyl-tRNA synthetase family. In terms of assembly, tetramer of two alpha and two beta subunits.

It is found in the cytoplasm. It catalyses the reaction tRNA(Gly) + glycine + ATP = glycyl-tRNA(Gly) + AMP + diphosphate. The sequence is that of Glycine--tRNA ligase alpha subunit from Streptococcus pneumoniae (strain P1031).